Consider the following 421-residue polypeptide: Expansin-like protein DDB_G0293186 (421 aa).

A signal peptide spans Met-1 to Ser-20. An N-linked (GlcNAc...) asparagine glycan is attached at Asn-19. In terms of domain architecture, Expansin-like EG45 spans Gly-43–Tyr-139. Cystine bridges form between Cys-46–Cys-70 and Cys-73–Cys-134. 2 N-linked (GlcNAc...) asparagine glycosylation sites follow: Asn-117 and Asn-391.

This sequence belongs to the expansin family. Expansin A subfamily.

The protein localises to the secreted. Its function is as follows. May serve to lubricate the movement of the cellulose microfibrils during cell growth and wall extension and/or may serve to maintain the fluid state of the slug cell wall. The polypeptide is Expansin-like protein DDB_G0293186 (Dictyostelium discoideum (Social amoeba)).